Consider the following 35-residue polypeptide: Conotoxin Cl6.16 (35 aa).

3 cysteine pairs are disulfide-bonded: Cys-10/Cys-22, Cys-16/Cys-27, and Cys-21/Cys-34.

As to expression, expressed by the venom duct.

The protein localises to the secreted. This Californiconus californicus (California cone) protein is Conotoxin Cl6.16.